Reading from the N-terminus, the 210-residue chain is Large ribosomal subunit protein uL4 (210 aa).

Positions 44-54 (KRQGTASTLTR) are enriched in polar residues. Residues 44 to 94 (KRQGTASTLTRSEVRGGGRKPYKQKGTGRARQGSIRTPLRPGGGVIFGPKP) are disordered. Positions 60-71 (GGRKPYKQKGTG) are enriched in basic residues.

Belongs to the universal ribosomal protein uL4 family. As to quaternary structure, part of the 50S ribosomal subunit.

Functionally, one of the primary rRNA binding proteins, this protein initially binds near the 5'-end of the 23S rRNA. It is important during the early stages of 50S assembly. It makes multiple contacts with different domains of the 23S rRNA in the assembled 50S subunit and ribosome. Forms part of the polypeptide exit tunnel. This Prochlorococcus marinus subsp. pastoris (strain CCMP1986 / NIES-2087 / MED4) protein is Large ribosomal subunit protein uL4.